Here is a 1174-residue protein sequence, read N- to C-terminus: DNA polymerase III subunit alpha (1174 aa).

The protein belongs to the DNA polymerase type-C family. DnaE subfamily. As to quaternary structure, DNA polymerase III contains a core (composed of alpha, epsilon and theta chains) that associates with a tau subunit. This core dimerizes to form the PolIII' complex. PolIII' associates with the gamma complex (composed of gamma, delta, delta', psi and chi chains) and with the beta chain to form the complete DNA polymerase III complex.

It localises to the cytoplasm. The enzyme catalyses DNA(n) + a 2'-deoxyribonucleoside 5'-triphosphate = DNA(n+1) + diphosphate. Its function is as follows. DNA polymerase III is a complex, multichain enzyme responsible for most of the replicative synthesis in bacteria. This DNA polymerase also exhibits 3' to 5' exonuclease activity. The alpha chain is the DNA polymerase. The chain is DNA polymerase III subunit alpha (dnaE) from Yersinia pestis.